A 1802-amino-acid polypeptide reads, in one-letter code: Signaling mucin HKR1 (1802 aa).

A signal peptide spans 1 to 21 (MVSLKIKKILLLVSLLNAIEA). Residues 22 to 1485 (YSNDTIYSTS…SASAGKYAVK (1464 aa)) are Extracellular-facing. N-linked (GlcNAc...) asparagine glycosylation is present at N24. Disordered regions lie at residues 47–176 (ISST…PREI) and 261–311 (YSSS…VSRP). Positions 54–81 (NKENAITSSSETTTMAGQYGESGSTTIM) are enriched in polar residues. The span at 88-107 (TSSQYISVTTTTQTSDTMSS) shows a compositional bias: low complexity. The segment covering 113 to 143 (EIATPSSSIVPTPLQSYSDESQISQTLSHNP) has biased composition (polar residues). 2 stretches are compositionally biased toward low complexity: residues 145 to 172 (SVAE…SSAV) and 261 to 302 (YSSS…SESS). Residues 453 to 480 (SVPVAVSSTYTSSPSASVVVPSAYASSP) form a 1; approximate repeat. The 12 X 28 AA tandem repeats of S-[AV]-[P]-V-A-V-S-S-T-Y-T-S-S-P-S-A-P-A-A-I-S-S-T-Y-T-S-S-P stretch occupies residues 453–788 (SVPVAVSSTY…VLSSTSTSSP (336 aa)). Tandem repeats lie at residues 481 to 508 (SVPV…TSSP), 509 to 536 (SAPV…TSSP), 537 to 564 (SAPV…TSSP), 565 to 592 (SAPV…TSSP), 593 to 620 (SVPV…TSSP), 621 to 648 (SAPV…TSSP), 649 to 676 (SVPV…TSSP), 677 to 704 (SVPV…TSSP), 705 to 732 (SAPV…TSSP), 733 to 760 (SAPV…TSSP), and 761 to 788 (SAPV…TSSP). 2 disordered regions span residues 961–984 (SLQS…TETS) and 1067–1165 (ETIP…SYSR). 2 stretches are compositionally biased toward polar residues: residues 970–984 (TKNP…TETS) and 1071–1123 (ASKS…TNTK). Over residues 1136–1165 (TMGENGEETGLTTTKTQYKSSSETSGSYSR) the composition is skewed to low complexity. N-linked (GlcNAc...) asparagine glycans are attached at residues N1252, N1293, N1342, and N1400. A helical membrane pass occupies residues 1486–1506 (IIIFLIVLTIGVLLWLFVAFF). Topologically, residues 1507–1802 (AFRHRNILLK…KQQNHQTTKI (296 aa)) are cytoplasmic. Residues 1534–1559 (ESTELSRSSSGNQVYNEKPPESENES) form a disordered region.

The protein belongs to the HKR1/MSB2 family. Post-translationally, could be O-glycosylated in the serine/threonine-rich domain.

It localises to the cell membrane. Plasma membrane signaling mucin that promotes activation of the MAPK for the filamentous growth pathway. May regulate beta-glucan synthesis. Overexpression provides resistance to HM-1 killer toxin. The sequence is that of Signaling mucin HKR1 (HKR1) from Saccharomyces cerevisiae (strain ATCC 204508 / S288c) (Baker's yeast).